A 313-amino-acid polypeptide reads, in one-letter code: Elongation factor Ts (313 aa).

Residues 82–85 (TDFV) form an involved in Mg(2+) ion dislocation from EF-Tu region.

The protein belongs to the EF-Ts family.

Its subcellular location is the cytoplasm. In terms of biological role, associates with the EF-Tu.GDP complex and induces the exchange of GDP to GTP. It remains bound to the aminoacyl-tRNA.EF-Tu.GTP complex up to the GTP hydrolysis stage on the ribosome. The polypeptide is Elongation factor Ts (Nostoc sp. (strain PCC 7120 / SAG 25.82 / UTEX 2576)).